A 372-amino-acid chain; its full sequence is Queuine tRNA-ribosyltransferase (372 aa).

The active-site Proton acceptor is Asp92. Residues 92-96 (DSGGF), Asp146, Gln188, and Gly215 contribute to the substrate site. The segment at 246–252 (GIGTLRE) is RNA binding. Catalysis depends on Asp265, which acts as the Nucleophile. Residues 270 to 274 (TRLGR) are RNA binding; important for wobble base 34 recognition. Zn(2+) is bound by residues Cys303, Cys305, Cys308, and His334.

Belongs to the queuine tRNA-ribosyltransferase family. In terms of assembly, homodimer. Within each dimer, one monomer is responsible for RNA recognition and catalysis, while the other monomer binds to the replacement base PreQ1. It depends on Zn(2+) as a cofactor.

The catalysed reaction is 7-aminomethyl-7-carbaguanine + guanosine(34) in tRNA = 7-aminomethyl-7-carbaguanosine(34) in tRNA + guanine. It functions in the pathway tRNA modification; tRNA-queuosine biosynthesis. Functionally, catalyzes the base-exchange of a guanine (G) residue with the queuine precursor 7-aminomethyl-7-deazaguanine (PreQ1) at position 34 (anticodon wobble position) in tRNAs with GU(N) anticodons (tRNA-Asp, -Asn, -His and -Tyr). Catalysis occurs through a double-displacement mechanism. The nucleophile active site attacks the C1' of nucleotide 34 to detach the guanine base from the RNA, forming a covalent enzyme-RNA intermediate. The proton acceptor active site deprotonates the incoming PreQ1, allowing a nucleophilic attack on the C1' of the ribose to form the product. After dissociation, two additional enzymatic reactions on the tRNA convert PreQ1 to queuine (Q), resulting in the hypermodified nucleoside queuosine (7-(((4,5-cis-dihydroxy-2-cyclopenten-1-yl)amino)methyl)-7-deazaguanosine). The protein is Queuine tRNA-ribosyltransferase of Synechococcus sp. (strain CC9902).